We begin with the raw amino-acid sequence, 71 residues long: DNA-directed RNA polymerase subunit omega (71 aa).

The protein belongs to the RNA polymerase subunit omega family. As to quaternary structure, the RNAP catalytic core consists of 2 alpha, 1 beta, 1 beta' and 1 omega subunit. When a sigma factor is associated with the core the holoenzyme is formed, which can initiate transcription.

It catalyses the reaction RNA(n) + a ribonucleoside 5'-triphosphate = RNA(n+1) + diphosphate. In terms of biological role, promotes RNA polymerase assembly. Latches the N- and C-terminal regions of the beta' subunit thereby facilitating its interaction with the beta and alpha subunits. The protein is DNA-directed RNA polymerase subunit omega of Campylobacter curvus (strain 525.92).